We begin with the raw amino-acid sequence, 251 residues long: Triosephosphate isomerase (251 aa).

Position 10–12 (10–12) interacts with substrate; it reads NWK. His99 serves as the catalytic Electrophile. The Proton acceptor role is filled by Glu167. Substrate is bound by residues Gly173, Ser211, and 232–233; that span reads GG.

The protein belongs to the triosephosphate isomerase family. In terms of assembly, homodimer.

It is found in the cytoplasm. It catalyses the reaction D-glyceraldehyde 3-phosphate = dihydroxyacetone phosphate. It participates in carbohydrate biosynthesis; gluconeogenesis. It functions in the pathway carbohydrate degradation; glycolysis; D-glyceraldehyde 3-phosphate from glycerone phosphate: step 1/1. Its function is as follows. Involved in the gluconeogenesis. Catalyzes stereospecifically the conversion of dihydroxyacetone phosphate (DHAP) to D-glyceraldehyde-3-phosphate (G3P). This chain is Triosephosphate isomerase, found in Neisseria meningitidis serogroup A / serotype 4A (strain DSM 15465 / Z2491).